Consider the following 377-residue polypeptide: MNVEQYTQVTTDFEKTLTKEKKSKQGIFFTPKTVREKLFGFTEHFQNTPGFSILEPSCGTGEIISECVERFPLASIKGVELDNDMSTICSKKYAEYNVDIVNEDFLLWKGGKFDFIVGNPPYVVRPSGYKNDNRIAKGRSNLYVEFLYKCITEHLKEDGILAFIIPSTIGNSSFYEPIRKLIITLDILSFEILDKHDFCDTNTRLCSIVIKNSPGTGKYTYRDYICDKDIPHHGNSYIGSLDLKFKTGFAWANVNKFFTDKSEIPFFTSSNIKLNEIHIGDKMKYLTQDTTKFFTGKALLIKTASAGKRGGRFEFGFSLYENDKWAVDNDIIVIQGPDTVLSIVQDVLMKDVTNEFINILVNNGHISMKLLKSIPLF.

The protein belongs to the N(4)/N(6)-methyltransferase family.

It carries out the reaction a 2'-deoxyadenosine in DNA + S-adenosyl-L-methionine = an N(6)-methyl-2'-deoxyadenosine in DNA + S-adenosyl-L-homocysteine + H(+). A gamma subtype methylase that recognizes the double-stranded sequence 5'-TCGA-3' and methylates A-4 on both strands. This is Modification methylase CviBIII (CVIBIIIM) from Paramecium bursaria Chlorella virus NC1A (PBCV-NC1A).